The chain runs to 233 residues: Small ribosomal subunit protein uS3 (233 aa).

The 69-residue stretch at 39–107 (VRQFLMKKLV…PAQINISEVR (69 aa)) folds into the KH type-2 domain.

It belongs to the universal ribosomal protein uS3 family. In terms of assembly, part of the 30S ribosomal subunit. Forms a tight complex with proteins S10 and S14.

Functionally, binds the lower part of the 30S subunit head. Binds mRNA in the 70S ribosome, positioning it for translation. This Buchnera aphidicola subsp. Schizaphis graminum (strain Sg) protein is Small ribosomal subunit protein uS3.